A 402-amino-acid chain; its full sequence is Homoserine O-acetyltransferase (402 aa).

Residues 1–17 show a composition bias toward polar residues; that stretch reads MDWQTTSADTAPSSFIT. Positions 1–39 are disordered; sequence MDWQTTSADTAPSSFITEEQDRSLFGKPPASGAWKESDP. One can recognise an AB hydrolase-1 domain in the interval 78–388; the sequence is NAVLVLHALT…HFGHDGFLIE (311 aa). Ser183 functions as the Nucleophile in the catalytic mechanism. Residue Arg255 participates in substrate binding. Catalysis depends on residues Asp349 and His382. Substrate is bound at residue Asp383.

This sequence belongs to the AB hydrolase superfamily. MetX family. Homodimer.

It is found in the cytoplasm. It carries out the reaction L-homoserine + acetyl-CoA = O-acetyl-L-homoserine + CoA. Its pathway is amino-acid biosynthesis; L-methionine biosynthesis via de novo pathway; O-acetyl-L-homoserine from L-homoserine: step 1/1. Its function is as follows. Transfers an acetyl group from acetyl-CoA to L-homoserine, forming acetyl-L-homoserine. This chain is Homoserine O-acetyltransferase, found in Leifsonia xyli subsp. xyli (strain CTCB07).